Consider the following 113-residue polypeptide: Dolichyl-diphosphooligosaccharide--protein glycosyltransferase subunit DAD1 (113 aa).

An N-acetylserine modification is found at S2. At 2–30 (SASVLSVISRFLEEYLSSTPQRLKLLDAY) the chain is on the cytoplasmic side. The helical transmembrane segment at 31–51 (LLYILLTGALQFGYCLLVGTF) threads the bilayer. A topological domain (lumenal) is located at residue P52. A helical transmembrane segment spans residues 53-73 (FNSFLSGFISCVGSFILAVCL). Over 74–92 (RIQINPQNKADFQGISPER) the chain is Cytoplasmic. Residues 93 to 113 (AFADFLFASTILHLVVMNFVG) traverse the membrane as a helical segment.

The protein belongs to the DAD/OST2 family. As to quaternary structure, component of the oligosaccharyltransferase (OST) complex. OST exists in two different complex forms which contain common core subunits RPN1, RPN2, OST48, OST4, DAD1 and TMEM258, either STT3A or STT3B as catalytic subunits, and form-specific accessory subunits. STT3A complex assembly occurs through the formation of 3 subcomplexes. Subcomplex 1 contains RPN1 and TMEM258, subcomplex 2 contains the STT3A-specific subunits STT3A, DC2/OSTC, and KCP2 as well as the core subunit OST4, and subcomplex 3 contains RPN2, DAD1, and OST48. The STT3A complex can form stable complexes with the Sec61 complex or with both the Sec61 and TRAP complexes.

Its subcellular location is the endoplasmic reticulum membrane. It participates in protein modification; protein glycosylation. In terms of biological role, subunit of the oligosaccharyl transferase (OST) complex that catalyzes the initial transfer of a defined glycan (Glc(3)Man(9)GlcNAc(2) in eukaryotes) from the lipid carrier dolichol-pyrophosphate to an asparagine residue within an Asn-X-Ser/Thr consensus motif in nascent polypeptide chains, the first step in protein N-glycosylation. N-glycosylation occurs cotranslationally and the complex associates with the Sec61 complex at the channel-forming translocon complex that mediates protein translocation across the endoplasmic reticulum (ER). All subunits are required for a maximal enzyme activity. The sequence is that of Dolichyl-diphosphooligosaccharide--protein glycosyltransferase subunit DAD1 from Sus scrofa (Pig).